The primary structure comprises 159 residues: SsrA-binding protein (159 aa).

Over residues 137 to 147 the composition is skewed to basic and acidic residues; it reads LAERQANRETE. Residues 137–159 are disordered; the sequence is LAERQANRETEQAVGRRLKGMHD.

It belongs to the SmpB family.

The protein localises to the cytoplasm. Its function is as follows. Required for rescue of stalled ribosomes mediated by trans-translation. Binds to transfer-messenger RNA (tmRNA), required for stable association of tmRNA with ribosomes. tmRNA and SmpB together mimic tRNA shape, replacing the anticodon stem-loop with SmpB. tmRNA is encoded by the ssrA gene; the 2 termini fold to resemble tRNA(Ala) and it encodes a 'tag peptide', a short internal open reading frame. During trans-translation Ala-aminoacylated tmRNA acts like a tRNA, entering the A-site of stalled ribosomes, displacing the stalled mRNA. The ribosome then switches to translate the ORF on the tmRNA; the nascent peptide is terminated with the 'tag peptide' encoded by the tmRNA and targeted for degradation. The ribosome is freed to recommence translation, which seems to be the essential function of trans-translation. The chain is SsrA-binding protein from Nocardioides sp. (strain ATCC BAA-499 / JS614).